A 692-amino-acid chain; its full sequence is Elongation factor G (692 aa).

Residues 8 to 283 (KNTRNIGIMA…AVVDYLPSPV (276 aa)) enclose the tr-type G domain. Residues 17–24 (AHIDAGKT), 81–85 (DTPGH), and 135–138 (NKMD) each bind GTP.

The protein belongs to the TRAFAC class translation factor GTPase superfamily. Classic translation factor GTPase family. EF-G/EF-2 subfamily.

Its subcellular location is the cytoplasm. Catalyzes the GTP-dependent ribosomal translocation step during translation elongation. During this step, the ribosome changes from the pre-translocational (PRE) to the post-translocational (POST) state as the newly formed A-site-bound peptidyl-tRNA and P-site-bound deacylated tRNA move to the P and E sites, respectively. Catalyzes the coordinated movement of the two tRNA molecules, the mRNA and conformational changes in the ribosome. The polypeptide is Elongation factor G (Exiguobacterium sp. (strain ATCC BAA-1283 / AT1b)).